The sequence spans 202 residues: Regulator of G-protein signaling 16 (202 aa).

S-palmitoyl cysteine attachment occurs at residues Cys2 and Cys12. Residues 65-181 enclose the RGS domain; sequence SFDLLLSSKN…LKSPAYRDLA (117 aa). Tyr168 carries the post-translational modification Phosphotyrosine; by EGFR. A Phosphotyrosine modification is found at Tyr177.

As to quaternary structure, interacts with GNAI1 and GNAQ. Interacts with GNAI2, GNAI3 and GNAO1. Palmitoylated on Cys-2 and/or Cys-12. In terms of processing, phosphorylated. Phosphorylation at Tyr-168 by EGFR enhances GTPase accelerating (GAP) activity toward GNAI1. In terms of tissue distribution, abundantly expressed in retina with lower levels of expression in most other tissues.

Its subcellular location is the membrane. In terms of biological role, regulates G protein-coupled receptor signaling cascades. Inhibits signal transduction by increasing the GTPase activity of G protein alpha subunits, thereby driving them into their inactive GDP-bound form. Plays an important role in the phototransduction cascade by regulating the lifetime and effective concentration of activated transducin alpha. May regulate extra and intracellular mitogenic signals. This Homo sapiens (Human) protein is Regulator of G-protein signaling 16 (RGS16).